A 719-amino-acid chain; its full sequence is Exonuclease mut-7 homolog (719 aa).

Positions 1–22 are disordered; that stretch reads MSKSNNVAPPCRQDQLGFVPAG. A 3'-5' exonuclease domain is found at 575-629; it reads NLANLVRLCLGKKLDKSNQFSNWAQRPLRKEQLRYAALDAFCLLEIYDAIEKQLT. The interval 644 to 719 is disordered; it reads NDVRPPSDSG…FEGPNTKSVL (76 aa). Residues 667–678 show a composition bias toward basic residues; that stretch reads RRNHRDKYNKRH. Composition is skewed to polar residues over residues 683-692 and 706-719; these read DSNSGNSSRA and EQQT…KSVL.

It belongs to the mut-7 family. Requires Mg(2+) as cofactor.

Its function is as follows. Possesses 3'-5' exoribonuclease activity. Required for 3'-end trimming of AGO1-bound miRNAs. The polypeptide is Exonuclease mut-7 homolog (Aedes aegypti (Yellowfever mosquito)).